A 661-amino-acid polypeptide reads, in one-letter code: ATP-dependent RNA helicase vasa (661 aa).

Residues 1 to 10 (MSDDWDDEPI) are compositionally biased toward acidic residues. The tract at residues 1-186 (MSDDWDDEPI…RRRRNEDDIN (186 aa)) is disordered. At S22 the chain carries Phosphoserine. T27 is subject to Phosphothreonine. Composition is skewed to gly residues over residues 38 to 52 (DGVG…GYQG) and 60 to 83 (RIGG…GGFH). Positions 85–95 (GRREGERDFRG) are enriched in basic and acidic residues. Tandem repeats lie at residues 93-99 (FRGGEGG), 100-106 (FRGGQGG), 107-113 (SRGGQGG), 114-120 (SRGGQGG), and 121-127 (FRGGEGG). Residues 93–127 (FRGGEGGFRGGQGGSRGGQGGSRGGQGGFRGGEGG) are 5 X 7 AA tandem repeats of [FS]-R-G-G-[EQ]-G-G. Residues 96 to 129 (GEGGFRGGQGGSRGGQGGSRGGQGGFRGGEGGFR) are compositionally biased toward gly residues. Over residues 131-172 (RLYENEDGDERRGRLDREERGGERRGRLDREERGGERGERGD) the composition is skewed to basic and acidic residues. A B30.2/SPRY domain-binding motif motif is present at residues 184 to 188 (DINNN). The required for posterior localization in oocyte stretch occupies residues 184 to 203 (DINNNNNIVEDVERKREFYI). The Q motif motif lies at 245-273 (QHFTSADLRDIIIDNVNKSGYKIPTPIQK). Positions 276-453 (IPVISSGRDL…GEFLKNYVFV (178 aa)) constitute a Helicase ATP-binding domain. 289–296 (AQTGSGKT) is a binding site for ATP. The DEAD box motif lies at 399 to 402 (DEAD). In terms of domain architecture, Helicase C-terminal spans 477–624 (KRSKLIEILS…TVPDFLRTCG (148 aa)).

This sequence belongs to the DEAD box helicase family. DDX4/VASA subfamily. As to quaternary structure, interacts with eIF5B and faf. Interacts with gus (via B30.2/SPRY domain) and Fsn (via B30.2/SPRY domain). Interacts with aub, me31B, eIF-4a and TER94. Interacts with piwi; this interaction is RNA independent. Interacts with Dcr-1 and Fmr1; these interactions occur in the polar granules. Mg(2+) is required as a cofactor. Ubiquitinated during oogenesis. Deubiquitinated by faf, which protects this protein from proteasome-mediated degradation. In terms of tissue distribution, abundantly expressed in the female germline. Gus and faf are required for vas expression in the posterior pole of the oocyte.

It is found in the cytoplasm. The protein localises to the perinuclear region. It localises to the cytoplasmic ribonucleoprotein granule. It catalyses the reaction ATP + H2O = ADP + phosphate + H(+). In terms of biological role, involved in translational control mechanisms operating in early stages of oogenesis. Required maternally in many stages of oogenesis, including cystocyte differentiation, oocyte differentiation, and specification of anterior-posterior polarity in the developing cysts. Essential for the formation and/or structural integrity of perinuclear nuage particles during germ cell formation. Required for gus, Fsn and aub accumulation at the posterior pole of the embryo. Required for the localization of vas to the perinuclear region of nurse cells. May have a role in production of piwi-interacting RNA (piRNA). The polypeptide is ATP-dependent RNA helicase vasa (Drosophila melanogaster (Fruit fly)).